A 223-amino-acid polypeptide reads, in one-letter code: UPF0641 membrane protein PJ4664.05 (223 aa).

The next 5 membrane-spanning stretches (helical) occupy residues 10–30 (FNSF…FNWI), 49–69 (LTVL…FSDI), 81–101 (ILLY…WSIV), 146–166 (LSIG…MLWV), and 190–210 (TIFY…LKMV).

The protein belongs to the UPF0641 family.

It localises to the endoplasmic reticulum membrane. The protein is UPF0641 membrane protein PJ4664.05 of Schizosaccharomyces pombe (strain 972 / ATCC 24843) (Fission yeast).